The sequence spans 375 residues: Guanine nucleotide-binding protein subunit beta (375 aa).

WD repeat units follow at residues 63–93 (GHTG…IVWN), 105–135 (LPCA…SIYN), 154–185 (GHKG…VLWD), 202–233 (GHTA…RLWD), 246–276 (GHEG…RLFD), 293–323 (GDIP…YVWD), and 339–369 (SHEG…KIWA).

The protein belongs to the WD repeat G protein beta family. In terms of assembly, g proteins are composed of 3 units, alpha, beta and gamma.

Its function is as follows. Guanine nucleotide-binding proteins (G proteins) are involved as a modulator or transducer in various transmembrane signaling systems. The beta and gamma chains are required for the GTPase activity, for replacement of GDP by GTP, and for G protein-effector interaction. This chain is Guanine nucleotide-binding protein subunit beta, found in Nicotiana tabacum (Common tobacco).